Here is a 502-residue protein sequence, read N- to C-terminus: Ubiquitin-associated protein 1 (502 aa).

Residues 1–95 (MASKKLGADF…AEAKVNSKSG (95 aa)) are interaction with ESCRT-I. One can recognise a UMA domain in the interval 17–63 (LDDVPFKTGDKFKTPAKVGLPIGFSLPDCLQVVREVQYDFSLEKKTI). The segment covering 86–100 (AEAKVNSKSGPEGDS) has biased composition (basic and acidic residues). The segment at 86 to 117 (AEAKVNSKSGPEGDSKMSFSKTHSTATMPPPI) is disordered. Residues 102–112 (MSFSKTHSTAT) are compositionally biased toward polar residues. Residues Ser-146, Ser-205, and Ser-289 each carry the phosphoserine modification. Positions 260-290 (VSNIKSLSFPKLDSDDSNQKTAKLASTFHST) are interaction with PTPN23. UBA domains lie at 389–430 (SPSE…LFAH) and 451–498 (QCSE…LMAR).

As to quaternary structure, component of an ESCRT-I complex (endosomal sorting complex required for transport I) which consists of TSG101, VPS28, VPS37A and UBAP1 in a 1:1:1:1 stoichiometry. Interacts with PTPN23. Interacts (via UBA domains) with ubiquitinated proteins. In terms of tissue distribution, ubiquitous. Highly expressed in heart, brain, placenta, lung, liver, skeletal muscle and pancreas.

Its subcellular location is the cytoplasm. It localises to the cytosol. The protein localises to the endosome. Its function is as follows. Component of the ESCRT-I complex, a regulator of vesicular trafficking process. Binds to ubiquitinated cargo proteins and is required for the sorting of endocytic ubiquitinated cargos into multivesicular bodies (MVBs). Plays a role in the proteasomal degradation of ubiquitinated cell-surface proteins, such as EGFR and BST2. This Homo sapiens (Human) protein is Ubiquitin-associated protein 1.